The sequence spans 301 residues: Protease HtpX (301 aa).

The next 2 membrane-spanning stretches (helical) occupy residues 4–24 (IGLF…ILSL) and 38–58 (LGNL…VSLF). His147 provides a ligand contact to Zn(2+). Glu148 is a catalytic residue. His151 provides a ligand contact to Zn(2+). 2 consecutive transmembrane segments (helical) span residues 155 to 175 (GDMV…MFFA) and 200 to 220 (FIIT…IVMW). Position 226 (Glu226) interacts with Zn(2+).

Belongs to the peptidase M48B family. Zn(2+) is required as a cofactor.

The protein localises to the cell inner membrane. The sequence is that of Protease HtpX from Acinetobacter baumannii (strain AB307-0294).